The chain runs to 516 residues: Protein psiC (516 aa).

The signal sequence occupies residues 1–19 (MKILILSFFLILGINLVFC). The region spanning 109–249 (ESKDEPGIYV…YDACGVCLGK (141 aa)) is the PA14 domain. 7 N-linked (GlcNAc...) asparagine glycosylation sites follow: Asn134, Asn234, Asn250, Asn284, Asn333, Asn357, and Asn367. Over residues 418-427 (DIIIDSSSDI) the composition is skewed to low complexity. Positions 418 to 465 (DIIIDSSSDIPIPTLSPSPQPSRFPTDTPTNTPMPPTRPPTPTEDPKI) are disordered. Pro residues predominate over residues 449–460 (TPMPPTRPPTPT).

Belongs to the prespore-cell-inducing factor family.

The protein resides in the secreted. This Dictyostelium discoideum (Social amoeba) protein is Protein psiC (psiC).